We begin with the raw amino-acid sequence, 202 residues long: MNTLYLGSNSPRRMEILTQLGYRVIQLPAGIDESVKAGETPFAYVQRMAEEKNRTALTLFCETNGTMPDFPLITADTCVVSDGIILGKPRSQAEAIEFLNRLSGKQHTVLTAVCIHYRGKTSSRVQTNRVVFKPLSSEEISAYVQSGEPMDKAGAYAVQGIGGIFIQSIEGSFSGIMGLPVYETVSMLQDLGYRSPLSALKP.

Catalysis depends on D76, which acts as the Proton acceptor.

Belongs to the Maf family. YhdE subfamily. A divalent metal cation is required as a cofactor.

The protein resides in the cytoplasm. The enzyme catalyses dTTP + H2O = dTMP + diphosphate + H(+). It carries out the reaction UTP + H2O = UMP + diphosphate + H(+). Nucleoside triphosphate pyrophosphatase that hydrolyzes dTTP and UTP. May have a dual role in cell division arrest and in preventing the incorporation of modified nucleotides into cellular nucleic acids. This Neisseria meningitidis serogroup B (strain ATCC BAA-335 / MC58) protein is dTTP/UTP pyrophosphatase.